The sequence spans 316 residues: WEB family protein At3g13190 (316 aa).

3 coiled-coil regions span residues 42–90 (WNKE…MIND), 119–195 (EEES…AEEH), and 233–266 (RDET…MAQE). Residues 295–316 (STKEVLKSKPRSSSKEGCLVKC) are disordered.

The protein belongs to the WEB family.

In Arabidopsis thaliana (Mouse-ear cress), this protein is WEB family protein At3g13190.